Reading from the N-terminus, the 584-residue chain is Vesicular glutamate transporter 2.1 (584 aa).

Over 1 to 70 (METPREPAGF…CTCFGLPRRY (70 aa)) the chain is Cytoplasmic. A helical transmembrane segment spans residues 71–91 (IIAIMSGLGFCISFGIRCNLG). Topologically, residues 92 to 124 (VAIVSMVNNSTIHLNGKIIIKEKAKFNWDPETV) are vesicular. N-linked (GlcNAc...) asparagine glycosylation is found at asparagine 99 and asparagine 100. The chain crosses the membrane as a helical span at residues 125-145 (GLIHGSFFWGYIVTQIPGGYI). The Cytoplasmic segment spans residues 146–148 (SSR). A helical membrane pass occupies residues 149 to 169 (LAANRVFGAAILLTSTLNMFI). At 170-177 (PSAARGHY) the chain is on the vesicular side. The helical transmembrane segment at 178–198 (GCVIFVRILQGLVEGVTYPAC) threads the bilayer. Residues 199–216 (HGIWSKWAPPLERSRLAT) lie on the Cytoplasmic side of the membrane. A helical membrane pass occupies residues 217–237 (TSFCGSYAGAVIAMPLAGILV). The Vesicular portion of the chain corresponds to 238-244 (QYTGWSS). Residues 245–265 (VFYVYGCFGIFWYMFWILVSY) form a helical membrane-spanning segment. At 266–310 (ESPAEHPTITAEERCYIEESIGESAKLLGPADKFKTPWRKFFTSM) the chain is on the cytoplasmic side. The chain crosses the membrane as a helical span at residues 311-331 (PVYAIIVANFCRSWTFYLLLI). Topologically, residues 332-349 (SQPAYFEEVFGFEISKVG) are vesicular. Residues 350-370 (MLSALPHLVMTIIVPIGGQLA) form a helical membrane-spanning segment. The Cytoplasmic portion of the chain corresponds to 371–386 (DHLRSKNILSTTTVRK). The helical transmembrane segment at 387–407 (IMNCGGFGMEATLLLIVGYSH) threads the bilayer. The Vesicular segment spans residues 408–409 (SK). A helical transmembrane segment spans residues 410 to 430 (GVAISFLVLAVGFSGFAISGF). The Cytoplasmic segment spans residues 431–445 (NVNHLDIAPRYASIL). Residues 446–466 (MGISNGVGTLSGMVCPLIVGA) traverse the membrane as a helical segment. Residues 467–477 (MTKHKTREEWQ) lie on the Vesicular side of the membrane. A helical membrane pass occupies residues 478 to 498 (YVFLIASLVHYGGVIFYGIFA). Residues 499 to 584 (SGEKQPWADP…YGYRQGGNYS (86 aa)) are Cytoplasmic-facing.

The protein belongs to the major facilitator superfamily. Sodium/anion cotransporter family. VGLUT subfamily. In terms of tissue distribution, expressed in spinal cord and retinal ganglion cells.

Its subcellular location is the cytoplasmic vesicle. It is found in the secretory vesicle. The protein resides in the synaptic vesicle membrane. The protein localises to the membrane. It localises to the synapse. Its subcellular location is the synaptosome. It is found in the cell membrane. It carries out the reaction L-glutamate(out) = L-glutamate(in). The enzyme catalyses 3 Na(+)(out) + phosphate(out) = 3 Na(+)(in) + phosphate(in). It catalyses the reaction phosphate(in) = phosphate(out). The catalysed reaction is K(+)(in) + H(+)(out) = K(+)(out) + H(+)(in). It carries out the reaction chloride(in) = chloride(out). With respect to regulation, chloride channel activity is allosterically activated by lumenal H(+) and Cl(-) leading to synaptic vesicles acidification. The L-glutamate transport activity is allosterically activated by lumenal H(+) and Cl(-). The allosteric requirement for H(+) efficiently prevents non-vesicular efflux across the plasma membrane. The L-glutamate uniporter activity exhibits a biphasic dependence on chloride concentration. In terms of biological role, multifunctional transporter that transports L-glutamate as well as multiple ions such as chloride, proton, potassium, sodium and phosphate. At the synaptic vesicle membrane, mainly functions as a uniporter which transports preferentially L-glutamate but also, phosphate from the cytoplasm into synaptic vesicles at presynaptic nerve terminals of excitatory neural cells. The L-glutamate or phosphate uniporter activity is electrogenic and is driven by the proton electrochemical gradient, mainly by the electrical gradient established by the vacuolar H(+)-ATPase across the synaptic vesicle membrane. In addition, functions as a chloride channel that allows a chloride permeation through the synaptic vesicle membrane therefore affects the proton electrochemical gradient and promotes synaptic vesicles acidification. Moreover, functions as a vesicular K(+)/H(+) antiport allowing to maintain the electrical gradient and to decrease chemical gradient and therefore sustain vesicular L-glutamate uptake. The vesicular H(+)/H(+) antiport activity is electroneutral. At the plasma membrane, following exocytosis, functions as a symporter of Na(+) and phosphate from the extracellular space to the cytoplasm allowing synaptic phosphate homeostasis regulation. The symporter activity is driven by an inside negative membrane potential and is electrogenic. Also involved in the regulation of retinal hyaloid vessel regression during postnatal development. May also play a role in the endocrine L-glutamatergic system of other tissues such as pineal gland and pancreas. Required for glutamate release by retinotectal synapses and visual acuity. This is Vesicular glutamate transporter 2.1 (slc17a6b) from Danio rerio (Zebrafish).